Reading from the N-terminus, the 80-residue chain is MWLKIQVFVLALALITLGIQAEPNSGPNNPLIQEEARACADVYKECWYPEKPCCKDRACQCTLGMTCKCKATLGDLFGRR.

The signal sequence occupies residues 1–21 (MWLKIQVFVLALALITLGIQA). Positions 22–37 (EPNSGPNNPLIQEEAR) are excised as a propeptide. 4 disulfide bridges follow: Cys-39–Cys-54, Cys-46–Cys-59, Cys-53–Cys-69, and Cys-61–Cys-67. Positions 72–80 (TLGDLFGRR) are excised as a propeptide.

This sequence belongs to the neurotoxin 02 (plectoxin) family. 01 (Tx3) subfamily. Expressed by the venom gland.

Its subcellular location is the secreted. Antagonist of L-type calcium channels (Cav1/CACNA1). In Phoneutria nigriventer (Brazilian armed spider), this protein is U6-ctenitoxin-Pn1a.